A 415-amino-acid chain; its full sequence is Tyrosine--tRNA ligase (415 aa).

A 'HIGH' region motif is present at residues 54 to 63 (PTGSNIHLGH). Residues 248–252 (KMSKS) carry the 'KMSKS' region motif. ATP is bound at residue Lys-251. Positions 351–414 (AKAFYLFSAV…LGKKTFRRLV (64 aa)) constitute an S4 RNA-binding domain.

Belongs to the class-I aminoacyl-tRNA synthetase family. TyrS type 2 subfamily. As to quaternary structure, homodimer.

The protein resides in the cytoplasm. The catalysed reaction is tRNA(Tyr) + L-tyrosine + ATP = L-tyrosyl-tRNA(Tyr) + AMP + diphosphate + H(+). Its function is as follows. Catalyzes the attachment of tyrosine to tRNA(Tyr) in a two-step reaction: tyrosine is first activated by ATP to form Tyr-AMP and then transferred to the acceptor end of tRNA(Tyr). This is Tyrosine--tRNA ligase from Synechococcus sp. (strain CC9605).